A 592-amino-acid chain; its full sequence is Bifunctional purine biosynthesis protein ATIC (592 aa).

Position 1 is an N-acetylmethionine (Met1). In terms of domain architecture, MGS-like spans 2–146 (APGQLALFSV…KNHARVTVVC (145 aa)). The interval 2-198 (APGQLALFSV…ISDYFRKQYS (197 aa)) is IMP cyclohydrolase. Residues 12–14 (SDK), 34–37 (SGGT), 64–67 (RVKT), 101–102 (CN), and 125–126 (DI) contribute to the IMP site. Lys137 serves as the catalytic Proton donor/acceptor; for FAICAR cyclization activity. At Lys199 the chain carries N6-acetyllysine. Residues 199 to 592 (KGVSQMPLRY…AHTNLRLFHH (394 aa)) are AICAR formyltransferase. Residues 207–208 (RY), His267, Gly316, Asp339, Asn431, and Arg451 each bind 5-amino-1-(5-phospho-beta-D-ribosyl)imidazole-4-carboxamide. His267 (proton acceptor; for AICAR formyltransferase activity) is an active-site residue. Position 452 (Ile452) interacts with (6R)-10-formyltetrahydrofolate. Position 541 (Phe541) interacts with 5-amino-1-(5-phospho-beta-D-ribosyl)imidazole-4-carboxamide. (6R)-10-formyltetrahydrofolate-binding positions include Asp546 and 565-566 (SA). 5-amino-1-(5-phospho-beta-D-ribosyl)imidazole-4-carboxamide is bound at residue Arg588.

This sequence belongs to the PurH family. In terms of assembly, homodimer. Associates with internalized INSR complexes on Golgi/endosomal membranes. Interacts with INSR; ATIC together with PRKAA2/AMPK2 and HACD3/PTPLAD1 is proposed to be part of a signaling network regulating INSR autophosphorylation and endocytosis. As to expression, present in the heart, brain, placenta, lung, liver, skeletal muscle, kidney, pancreas.

It localises to the cytoplasm. Its subcellular location is the cytosol. It carries out the reaction (6R)-10-formyltetrahydrofolate + 5-amino-1-(5-phospho-beta-D-ribosyl)imidazole-4-carboxamide = 5-formamido-1-(5-phospho-D-ribosyl)imidazole-4-carboxamide + (6S)-5,6,7,8-tetrahydrofolate. The catalysed reaction is 10-formyldihydrofolate + 5-amino-1-(5-phospho-beta-D-ribosyl)imidazole-4-carboxamide = 5-formamido-1-(5-phospho-D-ribosyl)imidazole-4-carboxamide + 7,8-dihydrofolate. It catalyses the reaction IMP + H2O = 5-formamido-1-(5-phospho-D-ribosyl)imidazole-4-carboxamide. The enzyme catalyses 5-amino-1-(5-phospho-D-ribosyl)imidazole-4-thiocarboxamide + 10-formyldihydrofolate = 6-thio-IMP + 7,8-dihydrofolate + H2O. It functions in the pathway purine metabolism; IMP biosynthesis via de novo pathway; 5-formamido-1-(5-phospho-D-ribosyl)imidazole-4-carboxamide from 5-amino-1-(5-phospho-D-ribosyl)imidazole-4-carboxamide (10-formyl THF route): step 1/1. It participates in purine metabolism; IMP biosynthesis via de novo pathway; IMP from 5-formamido-1-(5-phospho-D-ribosyl)imidazole-4-carboxamide: step 1/1. With respect to regulation, AMP and XMP inhibit AICAR formyltransferase activity. AICAR formyltransferase activity is inhibited by N-(6-fluoro-1-oxo-1,2-dihydroisoquinolin-7-yl)-5- [(3R)-3-hydroxypyrrolidin-1-yl]thiophene-2-sulfonamide (LSN 3213128), which acts as a tumor suppression in cancer cell lines. Functionally, bifunctional enzyme that catalyzes the last two steps of purine biosynthesis. Acts as a transformylase that incorporates a formyl group to the AMP analog AICAR (5-amino-1-(5-phospho-beta-D-ribosyl)imidazole-4-carboxamide) to produce the intermediate formyl-AICAR (FAICAR). Can use both 10-formyldihydrofolate and 10-formyltetrahydrofolate as the formyl donor in this reaction. Also catalyzes the cyclization of FAICAR to inosine monophosphate (IMP). Is able to convert thio-AICAR to 6-mercaptopurine ribonucleotide, an inhibitor of purine biosynthesis used in the treatment of human leukemias. Promotes insulin receptor/INSR autophosphorylation and is involved in INSR internalization. The chain is Bifunctional purine biosynthesis protein ATIC from Homo sapiens (Human).